We begin with the raw amino-acid sequence, 354 residues long: Uroporphyrinogen decarboxylase (354 aa).

Substrate contacts are provided by residues 27 to 31 (RQAGR), Asp-77, Tyr-154, Thr-209, and His-327.

Belongs to the uroporphyrinogen decarboxylase family. In terms of assembly, homodimer.

The protein resides in the cytoplasm. The catalysed reaction is uroporphyrinogen III + 4 H(+) = coproporphyrinogen III + 4 CO2. It participates in porphyrin-containing compound metabolism; protoporphyrin-IX biosynthesis; coproporphyrinogen-III from 5-aminolevulinate: step 4/4. In terms of biological role, catalyzes the decarboxylation of four acetate groups of uroporphyrinogen-III to yield coproporphyrinogen-III. The polypeptide is Uroporphyrinogen decarboxylase (Klebsiella pneumoniae subsp. pneumoniae (strain ATCC 700721 / MGH 78578)).